A 210-amino-acid chain; its full sequence is MDKKKDISMSVIKRLPKYHRYLGNLMRNDVDRISSKELSEKIGFTASQIRQDLNCFGDFGQQGYGYNVSELYSQMCNILGLTKVYRTVIIGAGNIGQAISNYIGFEKLGFELRAIFDINPKLIGISIRDIEIRDIDYLGDYLRENVIDIGIICVPSNNGQKVCNILVKNGVKGIWNFAPVDLIVPEDVKVENVHLSDSLLTLSCLLNDIE.

The segment at residues 17-56 (KYHRYLGNLMRNDVDRISSKELSEKIGFTASQIRQDLNCF) is a DNA-binding region (H-T-H motif). 91 to 96 (GAGNIG) lines the NAD(+) pocket.

This sequence belongs to the transcriptional regulatory Rex family. In terms of assembly, homodimer.

The protein resides in the cytoplasm. In terms of biological role, modulates transcription in response to changes in cellular NADH/NAD(+) redox state. The sequence is that of Redox-sensing transcriptional repressor Rex from Clostridium kluyveri (strain ATCC 8527 / DSM 555 / NBRC 12016 / NCIMB 10680 / K1).